Reading from the N-terminus, the 109-residue chain is Con-Ins K2 (109 aa).

The first 24 residues, 1–24 (MTTSSYFLLVALGLLLYVCQSSFG), serve as a signal peptide directing secretion. A propeptide spanning residues 25–29 (NPHTR) is cleaved from the precursor. 3 disulfides stabilise this stretch: cysteine 41-cysteine 90, cysteine 53-cysteine 103, and cysteine 89-cysteine 94. At glutamate 44 the chain carries 4-carboxyglutamate. Positions 57-83 (RKRRGFPSMLKARAKRNEAFLLQRDGR) are cleaved as a propeptide — c peptide.

This sequence belongs to the insulin family. Heterodimer of A and B chains; disulfide-linked. As to expression, expressed by the venom gland.

The protein localises to the secreted. This venom insulin, from a fish-hunting cone snail, facilitates prey capture by rapidly inducing hypoglycemic shock. It is one of the smallest known insulin found in nature and lacks the C-terminal segment of the B chain that, in human insulin, mediates engagement of the insulin receptor (INSR) and assembly of the hormone's hexameric storage form. Despite lacking this segment, it both binds and activates human insulin receptor (long isoform (HIR-B)) with a moderate potency (EC(50)=373.2 nM). In vivo, intraperitoneal injection of this peptide into zebrafish lowers blood glucose with a lower potency than human insulin. In addition, when applied to water, this peptide reduces overall locomotor activity of zebrafish larvae, observed as a significant decrease in the percentage of time spent swimming and movement frequency. When tested on a mouse model of diabetes, this insulin also lowers blood glucose with a 20-fold lower potency than human insulin. The chain is Con-Ins K2 from Conus kinoshitai (Kinoshita's cone).